The following is a 444-amino-acid chain: Argininosuccinate synthase (444 aa).

Residues 17 to 25 (AFSGGLDTS) and Ala43 each bind ATP. An L-citrulline-binding site is contributed by Tyr99. Gly129 and Thr131 together coordinate ATP. Thr131, Asn135, and Asp136 together coordinate L-aspartate. Residue Asn135 coordinates L-citrulline. Asp136 is a binding site for ATP. L-citrulline-binding residues include Arg139 and Ser192. Residue Asp194 coordinates ATP. Positions 201, 203, and 280 each coordinate L-citrulline.

It belongs to the argininosuccinate synthase family. Type 2 subfamily. Homotetramer.

The protein resides in the cytoplasm. It carries out the reaction L-citrulline + L-aspartate + ATP = 2-(N(omega)-L-arginino)succinate + AMP + diphosphate + H(+). The protein operates within amino-acid biosynthesis; L-arginine biosynthesis; L-arginine from L-ornithine and carbamoyl phosphate: step 2/3. This Paraburkholderia phymatum (strain DSM 17167 / CIP 108236 / LMG 21445 / STM815) (Burkholderia phymatum) protein is Argininosuccinate synthase.